The chain runs to 228 residues: E3 ubiquitin-protein ligase RNF114 (228 aa).

An RING-type zinc finger spans residues C29 to R68. Residues C91 and C94 each coordinate Zn(2+). The C2HC RNF-type zinc-finger motif lies at C91–C110. Position 102 is an N6-acetyllysine (K102). Zn(2+) contacts are provided by H106 and C110. K112 is subject to N6-acetyllysine.

As to quaternary structure, interacts with XAF1, the interaction increases XAF1 stability and proapoptotic effects, and may regulate IFN signaling. Autoubiquitinated. Polyubiquitinated in the presence of E2 enzymes UBE2D1, UBE2D2 and UBE2D3, but only monoubiquitinated in the presence of UBE2E1. As to expression, expressed in numerous tissues, including skin, CD4 lymphocytes and dendritic cells. Highest levels in testis.

Its subcellular location is the cytoplasm. It is found in the nucleus. It catalyses the reaction S-ubiquitinyl-[E2 ubiquitin-conjugating enzyme]-L-cysteine + [acceptor protein]-L-lysine = [E2 ubiquitin-conjugating enzyme]-L-cysteine + N(6)-ubiquitinyl-[acceptor protein]-L-lysine.. It functions in the pathway protein modification; protein ubiquitination. E3 ubiquitin-protein ligase that promotes the ubiquitination of various substrates. In turn, participates in the regulation of many biological processes including cell cycle, apoptosis, osteoclastogenesis as well as innate or adaptive immunity. Acts as a negative regulator of NF-kappa-B-dependent transcription by promoting the ubiquitination and stabilization of the NF-kappa-B inhibitor TNFAIP3. May promote the ubiquitination of TRAF6 as well. Also acts as a negative regulator of T-cell activation. Inhibits cellular dsRNA responses and interferon production by targeting MAVS component for proteasomal degradation. Ubiquitinates the CDK inhibitor CDKN1A leading to its degradationand probably also CDKN1B and CDKN1C. This activity stimulates cell cycle G1-to-S phase transition and suppresses cellular senescence. May play a role in spermatogenesis. This chain is E3 ubiquitin-protein ligase RNF114 (RNF114), found in Homo sapiens (Human).